The primary structure comprises 204 residues: MTDTIKIGVGGPVGAGKTQLIEKIVKRLAKDMSIGVITNDIYTKEDEKILVNSGVLPEDRIIGVETGGCPHTAIREDASMNFAAIDELKERNDDIELIFIESGGDNLAATFSPELVDFSIYIIDVAQGEKIPRKGGQGMIKSDFFVINKTDLAPYVGASLDRMAEDTKVFRGNRPFTFTNLKTDEGLDEVIQWIEQDVFLKGLA.

11–18 is a binding site for GTP; the sequence is GPVGAGKT.

This sequence belongs to the SIMIBI class G3E GTPase family. UreG subfamily. In terms of assembly, homodimer. UreD, UreF and UreG form a complex that acts as a GTP-hydrolysis-dependent molecular chaperone, activating the urease apoprotein by helping to assemble the nickel containing metallocenter of UreC. The UreE protein probably delivers the nickel.

The protein resides in the cytoplasm. Facilitates the functional incorporation of the urease nickel metallocenter. This process requires GTP hydrolysis, probably effectuated by UreG. The polypeptide is Urease accessory protein UreG (Staphylococcus saprophyticus subsp. saprophyticus (strain ATCC 15305 / DSM 20229 / NCIMB 8711 / NCTC 7292 / S-41)).